The sequence spans 284 residues: Putative transcription factor kapC (284 aa).

The span at methionine 1–histidine 10 shows a compositional bias: pro residues. The interval methionine 1 to glutamine 121 is disordered. Positions histidine 26–glutamine 40 are enriched in low complexity. Pro residues predominate over residues glutamine 41 to methionine 54. Polar residues predominate over residues asparagine 57 to isoleucine 67. The 64-residue stretch at proline 102–leucine 165 folds into the bZIP domain. Residues leucine 103–tyrosine 126 form a basic motif region. The segment covering arginine 108–alanine 118 has biased composition (low complexity). Residues leucine 130–leucine 161 form a leucine-zipper region. The interval glutamate 174–serine 284 is disordered. The span at proline 193–serine 222 shows a compositional bias: low complexity.

Belongs to the bZIP family.

It is found in the nucleus. In terms of biological role, putative transcription factor. This is Putative transcription factor kapC (kapC) from Aspergillus oryzae (strain ATCC 42149 / RIB 40) (Yellow koji mold).